The primary structure comprises 604 residues: Inositol-3-phosphate synthase 1 (604 aa).

Positions 88, 89, 90, 91, 163, 198, 199, 210, 213, 251, 252, 253, 254, 303, 327, 328, 330, 361, 362, 363, 376, 456, 457, 485, and 486 each coordinate NAD(+).

It belongs to the myo-inositol 1-phosphate synthase family. The cofactor is NAD(+).

The catalysed reaction is D-glucose 6-phosphate = 1D-myo-inositol 3-phosphate. The protein operates within polyol metabolism; myo-inositol biosynthesis; myo-inositol from D-glucose 6-phosphate: step 1/2. Key enzyme in myo-inositol biosynthesis pathway that catalyzes the conversion of glucose 6-phosphate to 1-myo-inositol 1-phosphate in a NAD-dependent manner. Rate-limiting enzyme in the synthesis of all inositol-containing compounds. De novo-synthesized myo-inositol is essential for incorporation into GPI (glycosylphosphatidylinositol) glycolipids during intra-erythrocytic development. The sequence is that of Inositol-3-phosphate synthase 1 from Plasmodium falciparum (isolate 3D7).